Here is a 491-residue protein sequence, read N- to C-terminus: Protein nucleotidyltransferase YdiU (491 aa).

ATP is bound by residues Gly94, Gly96, Arg97, Lys117, Asp129, Gly130, Arg180, and Arg187. The active-site Proton acceptor is the Asp256. The Mg(2+) site is built by Asn257 and Asp266. Asp266 is a binding site for ATP.

The protein belongs to the SELO family. Requires Mg(2+) as cofactor. Mn(2+) serves as cofactor.

The catalysed reaction is L-seryl-[protein] + ATP = 3-O-(5'-adenylyl)-L-seryl-[protein] + diphosphate. It catalyses the reaction L-threonyl-[protein] + ATP = 3-O-(5'-adenylyl)-L-threonyl-[protein] + diphosphate. It carries out the reaction L-tyrosyl-[protein] + ATP = O-(5'-adenylyl)-L-tyrosyl-[protein] + diphosphate. The enzyme catalyses L-histidyl-[protein] + UTP = N(tele)-(5'-uridylyl)-L-histidyl-[protein] + diphosphate. The catalysed reaction is L-seryl-[protein] + UTP = O-(5'-uridylyl)-L-seryl-[protein] + diphosphate. It catalyses the reaction L-tyrosyl-[protein] + UTP = O-(5'-uridylyl)-L-tyrosyl-[protein] + diphosphate. In terms of biological role, nucleotidyltransferase involved in the post-translational modification of proteins. It can catalyze the addition of adenosine monophosphate (AMP) or uridine monophosphate (UMP) to a protein, resulting in modifications known as AMPylation and UMPylation. In Clostridium botulinum (strain 657 / Type Ba4), this protein is Protein nucleotidyltransferase YdiU.